A 2130-amino-acid polypeptide reads, in one-letter code: DNA polymerase zeta catalytic subunit (2130 aa).

4 disordered regions span residues 528-635, 734-891, 927-954, and 1189-1243; these read PAES…TGTL, GCEI…HDEA, FTPS…SNTP, and QAKD…SAAQ. A compositionally biased stretch (low complexity) spans 553 to 574; it reads TPIKSISSKSKSSPSKTPTTPI. The span at 620–629 shows a compositional bias: polar residues; the sequence is PRLSLQLDQG. The segment covering 735–753 has biased composition (basic and acidic residues); sequence CEIERPHRSEGSALDELKP. Polar residues-rich tracts occupy residues 771-786, 794-808, and 818-835; these read SEIQ…TSLD, LSQS…SMNG, and DSSS…SVSE. A compositionally biased stretch (basic and acidic residues) spans 840-860; the sequence is LESKPKKSDETARSCDEKLQR. Over residues 938–954 the composition is skewed to polar residues; it reads TETTPQLSPKSNESNTP. Low complexity predominate over residues 1228–1243; sequence PSSQSSEQSVSSSAAQ. Zn(2+)-binding residues include C2041, C2045, C2054, and C2057. Positions 2086, 2089, 2098, and 2103 each coordinate [4Fe-4S] cluster. The CysB motif motif lies at 2086-2103; it reads CQACCGRLGSLQCDSLDC.

Belongs to the DNA polymerase type-B family. In terms of assembly, catalytic subunit of the zeta DNA polymerase complex, which consists of PolZ1/DNApol-zeta and the accessory component PolZ2/Rev7. Interacts with the apurinic/apyrimidinic (AP) endonuclease Rrp1; the interaction is likely indirect and mediated via PolZ2. The cofactor is [4Fe-4S] cluster.

It catalyses the reaction DNA(n) + a 2'-deoxyribonucleoside 5'-triphosphate = DNA(n+1) + diphosphate. Inhibited by tetracyclic diterpene antibiotic aphidicolin. Functionally, as the catalytic subunit of the DNA polymerase zeta complex, plays a crucial role in translesion DNA synthesis (TLS) and various DNA repair mechanisms. Lacks an intrinsic 3'-5' exonuclease activity and thus has no proofreading function. During homologous recombination (HR) repair, has a overlapping role with the error-prone translesion polymerase eta to initiate repair synthesis which is completed by end joining or another polymerase that can bind and reinitiate synthesis. May participate in the Rrp1-dependent base excision repair (BER) pathway responsible for repair of DNA lesions that gives rise to apurinic/apyrimidinic (AP) sites. Unlike mammalian orthologs, it is not an error-prone polymerase. The chain is DNA polymerase zeta catalytic subunit from Drosophila melanogaster (Fruit fly).